The primary structure comprises 245 residues: Uridylate kinase (245 aa).

Residue Lys-18–Gly-21 participates in ATP binding. Gly-60 contacts UMP. ATP contacts are provided by Gly-61 and Arg-65. Residues Asp-80 and Thr-141–Thr-148 each bind UMP. ATP contacts are provided by Thr-168, Tyr-174, and Asp-177.

It belongs to the UMP kinase family. Homohexamer.

The protein resides in the cytoplasm. It catalyses the reaction UMP + ATP = UDP + ADP. It participates in pyrimidine metabolism; CTP biosynthesis via de novo pathway; UDP from UMP (UMPK route): step 1/1. Its activity is regulated as follows. Inhibited by UTP. Its function is as follows. Catalyzes the reversible phosphorylation of UMP to UDP. This is Uridylate kinase from Pseudomonas aeruginosa (strain UCBPP-PA14).